The primary structure comprises 124 residues: Small ribosomal subunit protein uS12 (124 aa).

D89 bears the 3-methylthioaspartic acid mark.

The protein belongs to the universal ribosomal protein uS12 family. As to quaternary structure, part of the 30S ribosomal subunit. Contacts proteins S8 and S17. May interact with IF1 in the 30S initiation complex.

With S4 and S5 plays an important role in translational accuracy. Its function is as follows. Interacts with and stabilizes bases of the 16S rRNA that are involved in tRNA selection in the A site and with the mRNA backbone. Located at the interface of the 30S and 50S subunits, it traverses the body of the 30S subunit contacting proteins on the other side and probably holding the rRNA structure together. The combined cluster of proteins S8, S12 and S17 appears to hold together the shoulder and platform of the 30S subunit. The chain is Small ribosomal subunit protein uS12 from Aliivibrio salmonicida (strain LFI1238) (Vibrio salmonicida (strain LFI1238)).